Here is a 253-residue protein sequence, read N- to C-terminus: Major prion protein (253 aa).

Positions 1–22 (MANLGCWMLVLFVATWSDLGLC) are cleaved as a signal peptide. The tract at residues 23-38 (KKRPKPGGWNTGGSRY) is interaction with ADGRG6. The segment at 23 to 230 (KKRPKPGGWN…ESQAYYQRGS (208 aa)) is interaction with GRB2, ERI3 and SYN1. The segment at 26–108 (PKPGGWNTGG…WNKPSKPKTN (83 aa)) is disordered. 5 tandem repeats follow at residues 51–59 (PQGGGGWGQ), 60–67 (PHGGGWGQ), 68–75 (PHGGGWGQ), 76–83 (PHGGGWGQ), and 84–91 (PHGGGWGQ). The segment at 51–91 (PQGGGGWGQPHGGGWGQPHGGGWGQPHGGGWGQPHGGGWGQ) is 5 X 8 AA tandem repeats of P-H-G-G-G-W-G-Q. The span at 52-95 (QGGGGWGQPHGGGWGQPHGGGWGQPHGGGWGQPHGGGWGQGGGT) shows a compositional bias: gly residues. Residues H61, G62, G63, H69, G70, G71, H77, G78, G79, H85, G86, and G87 each contribute to the Cu(2+) site. The cysteines at positions 179 and 214 are disulfide-linked. N-linked (GlcNAc...) asparagine glycosylation is found at N181 and N197. A lipid anchor (GPI-anchor amidated serine) is attached at S230. A propeptide spans 231 to 253 (SMVLFSSPPVILLISFLIFLIVG) (removed in mature form).

It belongs to the prion family. In terms of assembly, monomer and homodimer. Has a tendency to aggregate into amyloid fibrils containing a cross-beta spine, formed by a steric zipper of superposed beta-strands. Soluble oligomers may represent an intermediate stage on the path to fibril formation. Copper binding may promote oligomerization. Interacts with GRB2, APP, ERI3/PRNPIP and SYN1. Mislocalized cytosolically exposed PrP interacts with MGRN1; this interaction alters MGRN1 subcellular location and causes lysosomal enlargement. Interacts with APP. Interacts with KIAA1191. Interacts with ADGRG6.

It is found in the cell membrane. The protein resides in the golgi apparatus. Functionally, its primary physiological function is unclear. May play a role in neuronal development and synaptic plasticity. May be required for neuronal myelin sheath maintenance. May promote myelin homeostasis through acting as an agonist for ADGRG6 receptor. May play a role in iron uptake and iron homeostasis. Soluble oligomers are toxic to cultured neuroblastoma cells and induce apoptosis (in vitro). Association with GPC1 (via its heparan sulfate chains) targets PRNP to lipid rafts. Also provides Cu(2+) or Zn(2+) for the ascorbate-mediated GPC1 deaminase degradation of its heparan sulfate side chains. The chain is Major prion protein (PRNP) from Gorilla gorilla gorilla (Western lowland gorilla).